The sequence spans 316 residues: Zinc finger protein 330 (316 aa).

Residues 1-24 form a disordered region; the sequence is MPKKKTGARKKAENRREREKQLRA. The short motif at 3-11 is the Nuclear localization signal element; sequence KKKTGARKK. A compositionally biased stretch (basic and acidic residues) spans 10–22; the sequence is KKAENRREREKQL. 4 C4-type zinc fingers span residues 42-58, 67-104, 129-149, and 175-189; these read CDKCQRRQKNRAFCYFC, CAQCGKTKCMMKSSDCVIKHAGVYSTGLAMVGAICDFC, CVECERGVWDHGGRIFSCSFC, and CVSCNRLGQHSCLRC. Residues 227 to 299 form a disordered region; it reads SMSTRSLKFG…ESSDLFNNLN (73 aa). Acidic residues predominate over residues 268–291; sequence DDDEEEDEAEDEEEEDGKDSDAES. Serine 287 is modified (phosphoserine).

The protein belongs to the NOA36 family.

The protein localises to the nucleus. It localises to the nucleolus. Its subcellular location is the chromosome. The protein resides in the centromere. The sequence is that of Zinc finger protein 330 (Znf330) from Mus musculus (Mouse).